Here is a 137-residue protein sequence, read N- to C-terminus: Large ribosomal subunit protein uL16 (137 aa).

This sequence belongs to the universal ribosomal protein uL16 family. In terms of assembly, part of the 50S ribosomal subunit.

Functionally, binds 23S rRNA and is also seen to make contacts with the A and possibly P site tRNAs. This Ectopseudomonas mendocina (strain ymp) (Pseudomonas mendocina) protein is Large ribosomal subunit protein uL16.